The following is a 648-amino-acid chain: Phosphomethylpyrimidine synthase (648 aa).

Substrate contacts are provided by residues Asn236, Met265, Tyr294, His330, 350 to 352 (SRG), 391 to 394 (DGLR), and Glu430. His434 lines the Zn(2+) pocket. Residue Tyr457 participates in substrate binding. Zn(2+) is bound at residue His498. The [4Fe-4S] cluster site is built by Cys578, Cys581, and Cys586.

The protein belongs to the ThiC family. Homodimer. Requires [4Fe-4S] cluster as cofactor.

The catalysed reaction is 5-amino-1-(5-phospho-beta-D-ribosyl)imidazole + S-adenosyl-L-methionine = 4-amino-2-methyl-5-(phosphooxymethyl)pyrimidine + CO + 5'-deoxyadenosine + formate + L-methionine + 3 H(+). Its pathway is cofactor biosynthesis; thiamine diphosphate biosynthesis. Functionally, catalyzes the synthesis of the hydroxymethylpyrimidine phosphate (HMP-P) moiety of thiamine from aminoimidazole ribotide (AIR) in a radical S-adenosyl-L-methionine (SAM)-dependent reaction. The protein is Phosphomethylpyrimidine synthase of Aliivibrio salmonicida (strain LFI1238) (Vibrio salmonicida (strain LFI1238)).